We begin with the raw amino-acid sequence, 137 residues long: Oleosin Ara h 11.0102 (137 aa).

A2 is modified (N-acetylalanine; alternate). A run of 2 helical transmembrane segments spans residues 27-47 (AVVA…ATVI) and 55-75 (LFVI…LLGL).

Belongs to the oleosin family. Expressed in seeds (at protein level).

It is found in the lipid droplet. The protein localises to the membrane. May have a structural role to stabilize the lipid body during desiccation of the seed by preventing coalescence of the oil. Probably interacts with both lipid and phospholipid moieties of lipid bodies. May also provide recognition signals for specific lipase anchorage in lipolysis during seedling growth. This is Oleosin Ara h 11.0102 from Arachis hypogaea (Peanut).